We begin with the raw amino-acid sequence, 484 residues long: ATP synthase subunit beta (484 aa).

169–176 (GGAGVGKT) lines the ATP pocket.

The protein belongs to the ATPase alpha/beta chains family. F-type ATPases have 2 components, CF(1) - the catalytic core - and CF(0) - the membrane proton channel. CF(1) has five subunits: alpha(3), beta(3), gamma(1), delta(1), epsilon(1). CF(0) has three main subunits: a(1), b(2) and c(9-12). The alpha and beta chains form an alternating ring which encloses part of the gamma chain. CF(1) is attached to CF(0) by a central stalk formed by the gamma and epsilon chains, while a peripheral stalk is formed by the delta and b chains.

It is found in the cell membrane. It catalyses the reaction ATP + H2O + 4 H(+)(in) = ADP + phosphate + 5 H(+)(out). In terms of biological role, produces ATP from ADP in the presence of a proton gradient across the membrane. The catalytic sites are hosted primarily by the beta subunits. This chain is ATP synthase subunit beta, found in Cutibacterium acnes (strain DSM 16379 / KPA171202) (Propionibacterium acnes).